An 89-amino-acid chain; its full sequence is Large ribosomal subunit protein uL24 (89 aa).

It belongs to the universal ribosomal protein uL24 family. Part of the 50S ribosomal subunit.

Its function is as follows. One of two assembly initiator proteins, it binds directly to the 5'-end of the 23S rRNA, where it nucleates assembly of the 50S subunit. One of the proteins that surrounds the polypeptide exit tunnel on the outside of the subunit. This chain is Large ribosomal subunit protein uL24, found in Chlorobium chlorochromatii (strain CaD3).